Here is a 1376-residue protein sequence, read N- to C-terminus: DNA-directed RNA polymerase subunit beta (1376 aa).

The protein belongs to the RNA polymerase beta chain family. In terms of assembly, the RNAP catalytic core consists of 2 alpha, 1 beta, 1 beta' and 1 omega subunit. When a sigma factor is associated with the core the holoenzyme is formed, which can initiate transcription.

The catalysed reaction is RNA(n) + a ribonucleoside 5'-triphosphate = RNA(n+1) + diphosphate. Functionally, DNA-dependent RNA polymerase catalyzes the transcription of DNA into RNA using the four ribonucleoside triphosphates as substrates. The polypeptide is DNA-directed RNA polymerase subunit beta (Methylorubrum extorquens (strain PA1) (Methylobacterium extorquens)).